The following is a 123-amino-acid chain: Large ribosomal subunit protein uL29 (123 aa).

The interval Arg-84–Ala-123 is disordered. Over residues Lys-86–Asn-96 the composition is skewed to basic residues.

The protein belongs to the universal ribosomal protein uL29 family. In terms of assembly, component of the large ribosomal subunit.

It is found in the cytoplasm. Its function is as follows. Component of the large ribosomal subunit. The ribosome is a large ribonucleoprotein complex responsible for the synthesis of proteins in the cell. This is Large ribosomal subunit protein uL29 (RPL35) from Ophiophagus hannah (King cobra).